The sequence spans 216 residues: Probable glutamine ABC transporter permease protein GlnM (216 aa).

The 189-residue stretch at 17-205 (FYHTLLASVI…VLTIPLSIGV (189 aa)) folds into the ABC transmembrane type-1 domain. Transmembrane regions (helical) follow at residues 21–41 (LLASVIALAGSFVLGVAVAVM), 63–83 (IPLLLITFVFYFGLPNAGLRL), 85–105 (GFQAGTVALTIYTSAFIAEAI), 132–152 (LHIILPQAIKIVIPPLGNQFL), and 181–201 (LVVFDVYIFVALFYLVLTIPL).

This sequence belongs to the binding-protein-dependent transport system permease family. As to quaternary structure, the complex is composed of two ATP-binding proteins (GlnQ), two transmembrane proteins (GlnM and GlnP) and a solute-binding protein (GlnH).

The protein resides in the cell membrane. Part of the ABC transporter complex GlnHMPQ involved in glutamine transport. Probably responsible for the translocation of the substrate across the membrane. The polypeptide is Probable glutamine ABC transporter permease protein GlnM (glnM) (Bacillus subtilis (strain 168)).